The chain runs to 217 residues: 3,4-dihydroxy-2-butanone 4-phosphate synthase (217 aa).

D-ribulose 5-phosphate-binding positions include 37-38 (RE), Asp-42, 150-154 (RGGHT), and Glu-174. Glu-38 serves as a coordination point for Mg(2+). Position 153 (His-153) interacts with Mg(2+).

The protein belongs to the DHBP synthase family. Homodimer. Requires Mg(2+) as cofactor. Mn(2+) is required as a cofactor.

The enzyme catalyses D-ribulose 5-phosphate = (2S)-2-hydroxy-3-oxobutyl phosphate + formate + H(+). Its pathway is cofactor biosynthesis; riboflavin biosynthesis; 2-hydroxy-3-oxobutyl phosphate from D-ribulose 5-phosphate: step 1/1. Functionally, catalyzes the conversion of D-ribulose 5-phosphate to formate and 3,4-dihydroxy-2-butanone 4-phosphate. In Salmonella arizonae (strain ATCC BAA-731 / CDC346-86 / RSK2980), this protein is 3,4-dihydroxy-2-butanone 4-phosphate synthase.